We begin with the raw amino-acid sequence, 309 residues long: uncharacterized protein (309 aa).

Residues 1–11 (MPGNSRRRGAV) are compositionally biased toward basic residues. A disordered region spans residues 1-69 (MPGNSRRRGA…PVKRTDETET (69 aa)). S-adenosyl-L-methionine contacts are provided by Gly-261, Ile-281, and Leu-290.

The protein belongs to the class IV-like SAM-binding methyltransferase superfamily. RNA methyltransferase TrmH family.

This is an uncharacterized protein from Mycobacterium leprae (strain TN).